Here is a 113-residue protein sequence, read N- to C-terminus: UPF0321 protein C569.02c (113 aa).

The first 17 residues, Met1 to Ala17, serve as a signal peptide directing secretion. N-linked (GlcNAc...) asparagine glycosylation is found at Asn20, Asn39, and Asn65.

This sequence belongs to the UPF0321 family.

The protein is UPF0321 protein C569.02c of Schizosaccharomyces pombe (strain 972 / ATCC 24843) (Fission yeast).